The following is a 122-amino-acid chain: Zein-alpha B49 (122 aa).

Belongs to the zein family.

In terms of biological role, zeins are major seed storage proteins. This Zea mays (Maize) protein is Zein-alpha B49.